The following is a 138-amino-acid chain: Basic phospholipase A2 homolog acutohaemolysin (138 aa).

Positions 1 to 16 are cleaved as a signal peptide; the sequence is MRALWIVAVLLVGVEG. Intrachain disulfides connect Cys-42–Cys-131, Cys-44–Cys-60, Cys-59–Cys-111, Cys-65–Cys-138, Cys-66–Cys-104, Cys-73–Cys-97, and Cys-91–Cys-102. The segment at 121–133 is important for membrane-damaging activities in eukaryotes and bacteria; heparin-binding; the sequence is KSFRYHLKPSCKK.

As to quaternary structure, monomer. Expressed by the venom gland.

It is found in the secreted. Its function is as follows. Snake venom phospholipase A2 homolog that lacks enzymatic activity. Is myotoxic. Has a strong indirect hemolytic activity and anticoagulant activity. A model of myotoxic mechanism has been proposed: an apo Lys49-PLA2 is activated by the entrance of a hydrophobic molecule (e.g. fatty acid) at the hydrophobic channel of the protein leading to a reorientation of a monomer. This reorientation causes a transition between 'inactive' to 'active' states, causing alignment of C-terminal and membrane-docking sites (MDoS) side-by-side and putting the membrane-disruption sites (MDiS) in the same plane, exposed to solvent and in a symmetric position for both monomers. The MDoS region stabilizes the toxin on membrane by the interaction of charged residues with phospholipid head groups. Subsequently, the MDiS region destabilizes the membrane with penetration of hydrophobic residues. This insertion causes a disorganization of the membrane, allowing an uncontrolled influx of ions (i.e. calcium and sodium), and eventually triggering irreversible intracellular alterations and cell death. In Deinagkistrodon acutus (Hundred-pace snake), this protein is Basic phospholipase A2 homolog acutohaemolysin.